A 119-amino-acid polypeptide reads, in one-letter code: Circadian clock oscillator protein KaiB (119 aa).

It belongs to the KaiB family. As to quaternary structure, may undergo a major conformational rearrangment; in the free state forms homooligomers. When bound to KaiC switches to a monomeric thioredoxin-fold (KaiB(fs)). The active oscillator complex is probably KaiC(6):KaiB(6).

Component of the KaiBC clock protein complex, which constitutes the main circadian regulator in cyanobacteria; it may modify the ATPase activity of KaiC. In terms of biological role, may be a metamorphic protein which reversibly switches between an inactive tetrameric fold and a rare, thioredoxin-like monomeric fold (KaiB(fs)). KaiB(fs) binds phospho-KaiC, and perhaps clock output effectors. This Prochlorococcus marinus (strain MIT 9303) protein is Circadian clock oscillator protein KaiB.